Consider the following 185-residue polypeptide: MISSNDFRTGTTIELDGSVWRVVEFLHVKPGKGSAFVRTKLKNAQTGSVVEKTFRAGETVPQATLEKRTMQHTYKDGDQYVFMDMETYEEARLNPEQMGTSVNYLKEEMEADIVFWGDQVLEVQLPTSVILEVTETDPGVKGDTATGGTKPAIVETGAQVMVPLFISIGEKIKVDTRDGSYLGRE.

Belongs to the elongation factor P family.

It is found in the cytoplasm. Its pathway is protein biosynthesis; polypeptide chain elongation. Functionally, involved in peptide bond synthesis. Stimulates efficient translation and peptide-bond synthesis on native or reconstituted 70S ribosomes in vitro. Probably functions indirectly by altering the affinity of the ribosome for aminoacyl-tRNA, thus increasing their reactivity as acceptors for peptidyl transferase. This is Elongation factor P from Rippkaea orientalis (strain PCC 8801 / RF-1) (Cyanothece sp. (strain PCC 8801)).